The chain runs to 959 residues: Translation initiation factor IF-2 (959 aa).

The segment covering 1–10 (MSDKTNDDKT) has biased composition (basic and acidic residues). Residues 1-374 (MSDKTNDDKT…SQMQETREKI (374 aa)) are disordered. A compositionally biased stretch (polar residues) spans 27-37 (EQSTVRQNFSH). Low complexity-rich tracts occupy residues 63-118 (AAAA…VTKP) and 128-138 (QRPGGQQAQRP). Composition is skewed to basic and acidic residues over residues 154–225 (SEMD…EAAK) and 232–241 (ARSERRDDAR). Residues 246 to 284 (GARPQQAGRPQGGRPQPAGRPQQGSPRPAPIIADAAPIA) are compositionally biased toward low complexity. Over residues 318–333 (PEVRAPKVVKGEDDRR) the composition is skewed to basic and acidic residues. The tr-type G domain maps to 457-626 (SRPPVVTIMG…LLQAEMLDLK (170 aa)). A G1 region spans residues 466 to 473 (GHVDHGKT). Residue 466–473 (GHVDHGKT) participates in GTP binding. Residues 491–495 (GITQH) form a G2 region. A G3 region spans residues 512–515 (DTPG). GTP-binding positions include 512-516 (DTPGH) and 566-569 (NKID). The interval 566–569 (NKID) is G4. A G5 region spans residues 602–604 (SAK).

Belongs to the TRAFAC class translation factor GTPase superfamily. Classic translation factor GTPase family. IF-2 subfamily.

The protein resides in the cytoplasm. Functionally, one of the essential components for the initiation of protein synthesis. Protects formylmethionyl-tRNA from spontaneous hydrolysis and promotes its binding to the 30S ribosomal subunits. Also involved in the hydrolysis of GTP during the formation of the 70S ribosomal complex. This chain is Translation initiation factor IF-2, found in Brucella abortus (strain 2308).